Here is a 345-residue protein sequence, read N- to C-terminus: S-adenosylmethionine:tRNA ribosyltransferase-isomerase (345 aa).

This sequence belongs to the QueA family. In terms of assembly, monomer.

Its subcellular location is the cytoplasm. The catalysed reaction is 7-aminomethyl-7-carbaguanosine(34) in tRNA + S-adenosyl-L-methionine = epoxyqueuosine(34) in tRNA + adenine + L-methionine + 2 H(+). It participates in tRNA modification; tRNA-queuosine biosynthesis. Transfers and isomerizes the ribose moiety from AdoMet to the 7-aminomethyl group of 7-deazaguanine (preQ1-tRNA) to give epoxyqueuosine (oQ-tRNA). In Shewanella baltica (strain OS155 / ATCC BAA-1091), this protein is S-adenosylmethionine:tRNA ribosyltransferase-isomerase.